The following is a 154-amino-acid chain: 17 kDa A-type inclusion protein (154 aa).

Residues 17–85 (QKDCSDKLDR…YKRELERDRY (69 aa)) adopt a coiled-coil conformation. The tract at residues 88 to 154 (SRYLTSSSDP…DVEPEHPPAF (67 aa)) is disordered.

This is 17 kDa A-type inclusion protein from Bos taurus (Bovine).